Reading from the N-terminus, the 651-residue chain is DNA mismatch repair protein MutL (651 aa).

The tract at residues 383-405 (TAAEEPTPAPTSPDLEIGDLDDQ) is disordered.

The protein belongs to the DNA mismatch repair MutL/HexB family.

In terms of biological role, this protein is involved in the repair of mismatches in DNA. It is required for dam-dependent methyl-directed DNA mismatch repair. May act as a 'molecular matchmaker', a protein that promotes the formation of a stable complex between two or more DNA-binding proteins in an ATP-dependent manner without itself being part of a final effector complex. The sequence is that of DNA mismatch repair protein MutL from Lacticaseibacillus casei (strain BL23) (Lactobacillus casei).